The chain runs to 806 residues: MTQAADTDIRVGQPEMVTLTIDGVEISVPKGTLVIRAAELMGIQIPRFCDHPLLEPVGACRQCLVEVEGQRKPLASCTTVATDDMVVRTQLTSEIADKAQHGVMELLLINHPLDCPMCDKGGECPLQNQAMSNGRTDSRFTEAKRTFAKPINISAQVLLDRERCILCARCTRFSDQIAGDPFIDMQERGALQQVGIYADEPFESYFSGNTVQICPVGALTGTAYRFRARPFDLVSSPSVCEHCASGCAQRTDHRRGKVLRRLAGDDPEVNEEWNCDKGRWAFTYATQPDVITTPLIRDGGDPKGALVPTSWSHAMAVAAQGLAAARGRTGVLVGGRVTWEDAYAYAKFARITLGTNDIDFRARPHSAEEADFLAARIAGRHMAVSYADLESAPVVLLVGFEPEDESPIVFLRLRKAARRHRVPVYTIAPFATGGLHKMSGRLIKTVPGGEPAALDDLATGAVGDLLATPGAVIMVGERLATVPGGLSAAARLADTTGARLAWVPRRAGERGALEAGALPTLLPGGRPLADEVARAQVCAAWHIAELPAAAGRDADGILAAAADETLAALLVGGIEPADFADPDAVLAALDATGFVVSLELRHSAVTERADVVFPVAPTTQKAGAFVNWEGRYRTFEPALRGSTLQAGQSDHRVLDALADDMGVHLGVPTVEAAREELAALGIWDGKHAAGPHIAATGPTQPEAGEAILTGWRMLLDEGRLQDGEPYLAGTARTPVVRLSPDTAAEIGAADGEAVTVSTSRGSITLPCSVTDMPDRVVWLPLNSAGSTVHRQLRVTIGSIVKIGAGS.

Residues 15–93 (EMVTLTIDGV…DMVVRTQLTS (79 aa)) form the 2Fe-2S ferredoxin-type domain. C49, C60, C63, and C77 together coordinate [2Fe-2S] cluster. The 4Fe-4S His(Cys)3-ligated-type domain maps to 95 to 134 (IADKAQHGVMELLLINHPLDCPMCDKGGECPLQNQAMSNG). Positions 111, 115, 118, 124, 164, 167, 170, 214, 240, 243, 247, and 275 each coordinate [4Fe-4S] cluster. Residues 233-289 (LVSSPSVCEHCASGCAQRTDHRRGKVLRRLAGDDPEVNEEWNCDKGRWAFTYATQPD) enclose the 4Fe-4S Mo/W bis-MGD-type domain.

The protein belongs to the complex I 75 kDa subunit family. [2Fe-2S] cluster serves as cofactor. [4Fe-4S] cluster is required as a cofactor.

The enzyme catalyses a quinone + NADH + 5 H(+)(in) = a quinol + NAD(+) + 4 H(+)(out). Its function is as follows. NDH-1 shuttles electrons from NADH, via FMN and iron-sulfur (Fe-S) centers, to quinones in the respiratory chain. The immediate electron acceptor for the enzyme in this species is believed to be menaquinone. Couples the redox reaction to proton translocation (for every two electrons transferred, four hydrogen ions are translocated across the cytoplasmic membrane), and thus conserves the redox energy in a proton gradient. The chain is NADH-quinone oxidoreductase subunit G (nuoG) from Mycobacterium bovis (strain ATCC BAA-935 / AF2122/97).